We begin with the raw amino-acid sequence, 206 residues long: MSYVRSKICGITRIEDALAAAEAGADAIGFVFYAKSPRAVDVRQARAIITELPPFVTTVGLFVNASRCELNEILEVVPLDLLQFHGDETPQDCEGYHRPWIKALRVRPGDDLEAACKQYAGARGILLDTYVAGVPGGTGEAFDWSLVPAHLSKPIILAGGLSADNVGQAIAQVRPYAVDVSGGVEQAKGIKDAAKIEAFMRAVKQA.

This sequence belongs to the TrpF family.

It carries out the reaction N-(5-phospho-beta-D-ribosyl)anthranilate = 1-(2-carboxyphenylamino)-1-deoxy-D-ribulose 5-phosphate. The protein operates within amino-acid biosynthesis; L-tryptophan biosynthesis; L-tryptophan from chorismate: step 3/5. The sequence is that of N-(5'-phosphoribosyl)anthranilate isomerase from Pseudomonas putida (strain GB-1).